Consider the following 298-residue polypeptide: Mitochondrial substrate carrier family protein N (298 aa).

At 1-13 (MAGDLTPSLFLKY) the chain is on the mitochondrial intermembrane side. Solcar repeat units follow at residues 8–92 (SLFL…FKKT), 104–188 (FRIP…TAEN), and 207–290 (QKLS…IKQM). Residues 14-34 (GFGGALSCSITHSLVVPLDVV) traverse the membrane as a helical segment. At 35-60 (KTLLQTNPGKYTGMMNGFSTVIKEQG) the chain is on the mitochondrial matrix side. Residues 61–81 (PSGLLQGLGPTAVGYALQGFL) form a helical membrane-spanning segment. The Mitochondrial intermembrane segment spans residues 82–105 (KFGFYEVFKKTYADAVGEKADQFR). The helical transmembrane segment at 106–126 (IPIWLAASATAEVIADIALCP) threads the bilayer. The Mitochondrial matrix segment spans residues 127-162 (NEAVRIRLVAEPTFAKSPVEAFGKIFKQEGVLGFYK). A helical transmembrane segment spans residues 163–179 (GLPPILLKQVPYTMAKF). Residues 180–208 (AVFEFTAENVYKGLAASGKPKESLTDGQK) are Mitochondrial intermembrane-facing. Residues 209–229 (LSVSLGSGIVAGIVAAIVSQP) traverse the membrane as a helical segment. Residues 230-262 (ADTILSKINQEKTDGGVVKAIGNIMRRLGVRGL) are Mitochondrial matrix-facing. The chain crosses the membrane as a helical span at residues 263–283 (FLGLPTRCFMVGTLTAGQFFI). Residues 284–298 (YDGIKQMLGLTPAKK) lie on the Mitochondrial intermembrane side of the membrane.

This sequence belongs to the mitochondrial carrier (TC 2.A.29) family.

It is found in the mitochondrion inner membrane. Mitochondrial solute carriers shuttle metabolites, nucleotides, and cofactors through the mitochondrial inner membrane. Transports phosphate groups from the cytosol to the mitochondrial matrix. Phosphate is cotransported with H(+). This is Mitochondrial substrate carrier family protein N (mcfN) from Dictyostelium discoideum (Social amoeba).